The chain runs to 494 residues: Sucrose-6-phosphate hydrolase (494 aa).

Residues 45-48, Gln-64, 107-108, 168-169, and Glu-223 each bind substrate; these read LLND, YS, and RD. Asp-48 is a catalytic residue.

It belongs to the glycosyl hydrolase 32 family.

It catalyses the reaction Hydrolysis of terminal non-reducing beta-D-fructofuranoside residues in beta-D-fructofuranosides.. It participates in glycan biosynthesis; sucrose metabolism. This is Sucrose-6-phosphate hydrolase (scrB) from Staphylococcus xylosus.